Reading from the N-terminus, the 351-residue chain is Methionine import ATP-binding protein MetN (351 aa).

Residues Ile-2–Val-241 enclose the ABC transporter domain. Position 38-45 (Gly-38–Ser-45) interacts with ATP.

The protein belongs to the ABC transporter superfamily. Methionine importer (TC 3.A.1.24) family. As to quaternary structure, the complex is composed of two ATP-binding proteins (MetN), two transmembrane proteins (MetI) and a solute-binding protein (MetQ).

Its subcellular location is the cell inner membrane. The catalysed reaction is L-methionine(out) + ATP + H2O = L-methionine(in) + ADP + phosphate + H(+). It catalyses the reaction D-methionine(out) + ATP + H2O = D-methionine(in) + ADP + phosphate + H(+). In terms of biological role, part of the ABC transporter complex MetNIQ involved in methionine import. Responsible for energy coupling to the transport system. The sequence is that of Methionine import ATP-binding protein MetN from Rhodospirillum rubrum (strain ATCC 11170 / ATH 1.1.1 / DSM 467 / LMG 4362 / NCIMB 8255 / S1).